Reading from the N-terminus, the 325-residue chain is Thiamine-monophosphate kinase (325 aa).

Residues aspartate 30, serine 45, threonine 46, and aspartate 47 each contribute to the Mg(2+) site. Histidine 54 contributes to the substrate binding site. Mg(2+) is bound by residues aspartate 75 and aspartate 122. Residues 121-122 (GD) and arginine 146 contribute to the ATP site. Aspartate 212 provides a ligand contact to Mg(2+). Position 214 (serine 214) interacts with ATP. Aspartate 215 lines the Mg(2+) pocket. Substrate-binding residues include glutamate 263 and tyrosine 319.

It belongs to the thiamine-monophosphate kinase family.

The catalysed reaction is thiamine phosphate + ATP = thiamine diphosphate + ADP. It functions in the pathway cofactor biosynthesis; thiamine diphosphate biosynthesis; thiamine diphosphate from thiamine phosphate: step 1/1. Catalyzes the ATP-dependent phosphorylation of thiamine-monophosphate (TMP) to form thiamine-pyrophosphate (TPP), the active form of vitamin B1. This is Thiamine-monophosphate kinase (thiL) from Salmonella typhimurium (strain LT2 / SGSC1412 / ATCC 700720).